The primary structure comprises 241 residues: NAD-dependent protein deacylase (241 aa).

The region spanning 1–237 (MNFPYRNIVV…PKLVDEILAL (237 aa)) is the Deacetylase sirtuin-type domain. Residue 13-32 (GAGISAESGIQTFRAQDGLW) participates in NAD(+) binding. The substrate site is built by tyrosine 57 and arginine 60. Residue 94–97 (QNID) coordinates NAD(+). Histidine 112 functions as the Proton acceptor in the catalytic mechanism. Zn(2+)-binding residues include cysteine 120 and cysteine 139. NAD(+)-binding positions include 179–181 (GTS), 205–207 (NLE), and alanine 223.

It belongs to the sirtuin family. Class III subfamily. As to quaternary structure, monomer. The cofactor is Zn(2+).

Its subcellular location is the cytoplasm. It is found in the host cytoplasm. The protein localises to the host cytosol. The protein resides in the host nucleus. The catalysed reaction is N(6)-acetyl-L-lysyl-[protein] + NAD(+) + H2O = 2''-O-acetyl-ADP-D-ribose + nicotinamide + L-lysyl-[protein]. The enzyme catalyses N(6)-succinyl-L-lysyl-[protein] + NAD(+) + H2O = 2''-O-succinyl-ADP-D-ribose + nicotinamide + L-lysyl-[protein]. Functionally, NAD-dependent lysine deacetylase and desuccinylase that specifically removes acetyl and succinyl groups on target proteins. Modulates the activities of several proteins which are inactive in their acylated form. In the intracellular pathogen V.parahaemolyticus, this enzyme regulates host response during infection by induction of host histone deacetylation; it specifically causes deacetylation of histone lysine residues H3K56, H3K9, H3K18 and H4K16 which results in transcriptional repression of several host genes involved in epigenetic regulation, immune response, and autophagy. In Vibrio parahaemolyticus serotype O3:K6 (strain RIMD 2210633), this protein is NAD-dependent protein deacylase.